Reading from the N-terminus, the 171-residue chain is Peptide deformylase (171 aa).

Cys91 and His133 together coordinate Fe cation. Residue Glu134 is part of the active site. His137 is a Fe cation binding site.

This sequence belongs to the polypeptide deformylase family. Fe(2+) is required as a cofactor.

The enzyme catalyses N-terminal N-formyl-L-methionyl-[peptide] + H2O = N-terminal L-methionyl-[peptide] + formate. Removes the formyl group from the N-terminal Met of newly synthesized proteins. Requires at least a dipeptide for an efficient rate of reaction. N-terminal L-methionine is a prerequisite for activity but the enzyme has broad specificity at other positions. This chain is Peptide deformylase, found in Mannheimia succiniciproducens (strain KCTC 0769BP / MBEL55E).